Consider the following 327-residue polypeptide: MSSDTSLSESSLLKEESGSLTKSRPPIKSNPVRENIKSFVAGGVGGVCAVFTGHPFDLIKVRCQNGQANSTVHAITNIIKEAKTQVKGTLFTNSVKGFYKGVIPPLLGVTPIFAVSFWGYDVGKKLVTFNNKQGGSNELTMGQMAAAGFISAIPTTLVTAPTERVKVVLQTSSKGSFIQAAKTIVKEGGIASLFKGSLATLARDGPGSALYFASYEISKNYLNSRQPRQDAGKDEPVNILNVCLAGGIAGMSMWLAVFPIDTIKTKLQASSTRQNMLSATKEIYLQRGGIKGFFPGLGPALLRSFPANAATFLGVEMTHSLFKKYGI.

The segment covering M1–S11 has biased composition (low complexity). The tract at residues M1–S29 is disordered. The next 6 membrane-spanning stretches (helical) occupy residues R33 to A49, L107 to G123, M141 to T162, G196 to F212, L244 to I260, and F293 to L313. 3 Solcar repeats span residues R33–L126, L139–Y221, and V237–L321.

The protein belongs to the mitochondrial carrier (TC 2.A.29) family.

The protein resides in the mitochondrion inner membrane. Its function is as follows. Transports carnitine, acetylcarnitine, propionylcarnitine and to a much lower extent medium- and long-chain acylcarnitines. The polypeptide is Mitochondrial carnitine carrier (CRC1) (Saccharomyces cerevisiae (strain ATCC 204508 / S288c) (Baker's yeast)).